A 637-amino-acid chain; its full sequence is Threonine--tRNA ligase (637 aa).

The TGS domain maps to 1-61 (MLNITLPDGS…VEDSAVQIIT (61 aa)). The interval 242-533 (DHRKLGKQLD…LIENHAGSFP (292 aa)) is catalytic. Positions 333, 384, and 510 each coordinate Zn(2+).

This sequence belongs to the class-II aminoacyl-tRNA synthetase family. As to quaternary structure, homodimer. Zn(2+) is required as a cofactor.

It localises to the cytoplasm. It catalyses the reaction tRNA(Thr) + L-threonine + ATP = L-threonyl-tRNA(Thr) + AMP + diphosphate + H(+). Functionally, catalyzes the attachment of threonine to tRNA(Thr) in a two-step reaction: L-threonine is first activated by ATP to form Thr-AMP and then transferred to the acceptor end of tRNA(Thr). Also edits incorrectly charged L-seryl-tRNA(Thr). The protein is Threonine--tRNA ligase of Neisseria meningitidis serogroup A / serotype 4A (strain DSM 15465 / Z2491).